A 167-amino-acid polypeptide reads, in one-letter code: 2-amino-4-hydroxy-6-hydroxymethyldihydropteridine pyrophosphokinase (167 aa).

It belongs to the HPPK family.

It carries out the reaction 6-hydroxymethyl-7,8-dihydropterin + ATP = (7,8-dihydropterin-6-yl)methyl diphosphate + AMP + H(+). It participates in cofactor biosynthesis; tetrahydrofolate biosynthesis; 2-amino-4-hydroxy-6-hydroxymethyl-7,8-dihydropteridine diphosphate from 7,8-dihydroneopterin triphosphate: step 4/4. Catalyzes the transfer of pyrophosphate from adenosine triphosphate (ATP) to 6-hydroxymethyl-7,8-dihydropterin, an enzymatic step in folate biosynthesis pathway. This is 2-amino-4-hydroxy-6-hydroxymethyldihydropteridine pyrophosphokinase (folK) from Bacillus subtilis (strain 168).